The sequence spans 546 residues: Arginine--tRNA ligase (546 aa).

The short motif at 122–132 (ANPTGPFTVGH) is the 'HIGH' region element.

Belongs to the class-I aminoacyl-tRNA synthetase family. As to quaternary structure, monomer.

The protein localises to the cytoplasm. The enzyme catalyses tRNA(Arg) + L-arginine + ATP = L-arginyl-tRNA(Arg) + AMP + diphosphate. This chain is Arginine--tRNA ligase, found in Thermotoga petrophila (strain ATCC BAA-488 / DSM 13995 / JCM 10881 / RKU-1).